Reading from the N-terminus, the 498-residue chain is UPF0371 protein cauri_2449 (498 aa).

It belongs to the UPF0371 family.

This Corynebacterium aurimucosum (strain ATCC 700975 / DSM 44827 / CIP 107346 / CN-1) (Corynebacterium nigricans) protein is UPF0371 protein cauri_2449.